A 504-amino-acid polypeptide reads, in one-letter code: ATP synthase subunit alpha 2 (504 aa).

169–176 (GDRQTGKT) contacts ATP.

This sequence belongs to the ATPase alpha/beta chains family. As to quaternary structure, F-type ATPases have 2 components, CF(1) - the catalytic core - and CF(0) - the membrane proton channel. CF(1) has five subunits: alpha(3), beta(3), gamma(1), delta(1), epsilon(1). CF(0) has three main subunits: a(1), b(2) and c(9-12). The alpha and beta chains form an alternating ring which encloses part of the gamma chain. CF(1) is attached to CF(0) by a central stalk formed by the gamma and epsilon chains, while a peripheral stalk is formed by the delta and b chains.

Its subcellular location is the cell membrane. The enzyme catalyses ATP + H2O + 4 H(+)(in) = ADP + phosphate + 5 H(+)(out). In terms of biological role, produces ATP from ADP in the presence of a proton gradient across the membrane. The alpha chain is a regulatory subunit. The protein is ATP synthase subunit alpha 2 of Listeria monocytogenes serovar 1/2a (strain ATCC BAA-679 / EGD-e).